A 382-amino-acid chain; its full sequence is Ubiquitin-like protease 4 (382 aa).

The interval 46–106 is disordered; sequence GTHLDGSIGE…DNDEWTNQKR (61 aa). Residues 84–100 show a composition bias toward acidic residues; that stretch reads DLVDEDEEEEDEEDNDE.

It belongs to the peptidase C48 family. Expressed in hermaphrodite-specific neurons, head muscles, body wall muscles and pharyngeal cells.

It is found in the cytoplasm. The protein resides in the cytoskeleton. The protein localises to the microtubule organizing center. It localises to the centrosome. Its subcellular location is the nucleus. It is found in the mitochondrion matrix. The protein operates within protein modification; protein sumoylation. Protease required for deconjugation of smo-1 conjugates from target proteins which is necessary for cell cycle progression. Required for respiration and the maintenance of normal mitochondrial homeostasis. In response to mitochondrial stress, required for the removal of smo-1 conjugates from the transcription factor dve-1, which promotes the translocation of dve-1 from the cytosol to the nucleus to initiate the mitochondrial unfolded protein response. Furthermore, removes the smo-1 conjugates from the transcription factor atfs-1 to promote its stability and activate the mitochondrial unfolded protein response. Also plays a role in promoting mitochondrial unfolded protein response-mediated innate immunity following infection with P.aeruginosa. This Caenorhabditis elegans protein is Ubiquitin-like protease 4.